A 344-amino-acid polypeptide reads, in one-letter code: Methionine synthase (344 aa).

Residues H211, C213, E236, and C315 each coordinate Zn(2+).

It belongs to the archaeal MetE family. Zn(2+) is required as a cofactor.

It functions in the pathway amino-acid biosynthesis; L-methionine biosynthesis via de novo pathway. Its function is as follows. Catalyzes the transfer of a methyl group to L-homocysteine resulting in methionine formation. The physiological methyl donor is unknown. The polypeptide is Methionine synthase (Thermoplasma volcanium (strain ATCC 51530 / DSM 4299 / JCM 9571 / NBRC 15438 / GSS1)).